The chain runs to 130 residues: Larval cuticle protein 1 (130 aa).

The N-terminal stretch at 1–16 is a signal peptide; sequence MFKFVMICAVLGLAVA. The region spanning 43-104 is the Chitin-binding type R&amp;R domain; it reads ADGFDSSLHT…PSGAWIPTPP (62 aa).

Functionally, component of the larval cuticle. The polypeptide is Larval cuticle protein 1 (Lcp1) (Drosophila melanogaster (Fruit fly)).